We begin with the raw amino-acid sequence, 356 residues long: Golgi-resident adenosine 3',5'-bisphosphate 3'-phosphatase (356 aa).

Residue M1 is modified to N-acetylmethionine. Over 1-12 the chain is Cytoplasmic; sequence MAPMGIRLSPLG. Residues 13–33 traverse the membrane as a helical segment; it reads VAVFFLLGLGVLYHLYSGFLA. Residues 34 to 356 are Lumenal-facing; sequence GRFSLFGLGS…KLPDLEKSGH (323 aa). The disordered stretch occupies residues 84–104; sequence ESNVLHEKSKGKTREGADDKM. The active-site Proton acceptor is the D108. Mg(2+) is bound by residues E131, D172, L174, and D175. The active-site Proton acceptor is T177. The AMP site is built by S240 and H243. N257 is a glycosylation site (N-linked (GlcNAc...) asparagine). The AMP site is built by G266 and K270. Residue D298 participates in Mg(2+) binding.

The protein belongs to the inositol monophosphatase superfamily. Mg(2+) is required as a cofactor. Post-translationally, N-glycosylated. Contains N-linked glycan resistant to endoglycosydase H.

The protein resides in the golgi apparatus. Its subcellular location is the trans-Golgi network membrane. It carries out the reaction adenosine 3',5'-bisphosphate + H2O = AMP + phosphate. Its pathway is sulfur metabolism. Strongly inhibited by lithium. In terms of biological role, exhibits 3'-nucleotidase activity toward adenosine 3',5'-bisphosphate (PAP), namely hydrolyzes adenosine 3',5'-bisphosphate into adenosine 5'-monophosphate (AMP) and a phosphate. May play a role in the formation of skeletal elements derived through endochondral ossification, possibly by clearing adenosine 3',5'-bisphosphate produced by Golgi sulfotransferases during glycosaminoglycan sulfation. Has no activity toward 3'-phosphoadenosine 5'-phosphosulfate (PAPS) or inositol phosphate (IP) substrates including I(1)P, I(1,4)P2, I(1,3,4)P3, I(1,4,5)P3 and I(1,3,4,5)P4. The polypeptide is Golgi-resident adenosine 3',5'-bisphosphate 3'-phosphatase (Mus musculus (Mouse)).